The following is a 496-amino-acid chain: Probable ATP-dependent DNA helicase RecS (496 aa).

The Helicase ATP-binding domain maps to 25-192 (IESILSGKDT…MNLLELQHAV (168 aa)). Residue 38 to 45 (LPTGGGKS) participates in ATP binding. A DEAH box motif is present at residues 136 to 139 (DEAH). One can recognise a Helicase C-terminal domain in the interval 219-363 (RVIQLVENLQ…EIADVIRVLE (145 aa)).

This sequence belongs to the helicase family. RecQ subfamily. In terms of assembly, interacts with SSB (ssbA) and YpbB.

It localises to the cytoplasm. It is found in the nucleoid. The catalysed reaction is Couples ATP hydrolysis with the unwinding of duplex DNA by translocating in the 3'-5' direction.. It carries out the reaction ATP + H2O = ADP + phosphate + H(+). Its function is as follows. Probable 3'-5' DNA helicase. Required in synaptic and/or post-synaptic stages of recombination. Probably has an overlapping function with RecQ. It probably acts to help generate ss-DNA from ds-DNA breaks. This chain is Probable ATP-dependent DNA helicase RecS, found in Bacillus subtilis (strain 168).